A 119-amino-acid polypeptide reads, in one-letter code: MFKKADRKEARERRHLRVRKKVFGTPERPRLSVYRSEKNIYAQIIDDVNAVTLVAASSLDKAIEVKGSNKEAAKLVGELVAKRAIEKGINDVVFDRGGYVYHGRVEALASGAREAGLKF.

The protein belongs to the universal ribosomal protein uL18 family. Part of the 50S ribosomal subunit; part of the 5S rRNA/L5/L18/L25 subcomplex. Contacts the 5S and 23S rRNAs.

Functionally, this is one of the proteins that bind and probably mediate the attachment of the 5S RNA into the large ribosomal subunit, where it forms part of the central protuberance. The polypeptide is Large ribosomal subunit protein uL18 (Clostridium perfringens (strain 13 / Type A)).